A 540-amino-acid polypeptide reads, in one-letter code: Type II methyltransferase M.AccI (540 aa).

It belongs to the N(4)/N(6)-methyltransferase family. Monomer.

It catalyses the reaction a 2'-deoxyadenosine in DNA + S-adenosyl-L-methionine = an N(6)-methyl-2'-deoxyadenosine in DNA + S-adenosyl-L-homocysteine + H(+). In terms of biological role, a gamma subtype methylase, recognizes the double-stranded sequence 5'-GTMKAC-3', methylates A-5 on both strands, and protects the DNA from cleavage by the AccI endonuclease. The protein is Type II methyltransferase M.AccI (accIM) of Acinetobacter calcoaceticus.